We begin with the raw amino-acid sequence, 612 residues long: tRNA 5-methylaminomethyl-2-thiouridine biosynthesis bifunctional protein MnmC (612 aa).

Residues 1 to 218 are tRNA (mnm(5)s(2)U34)-methyltransferase; sequence MITFRGDGLY…KREILEASLE (218 aa). Residues 244–612 are FAD-dependent cmnm(5)s(2)U34 oxidoreductase; the sequence is IGAGVAGLAA…VRKLKRGLVR (369 aa).

The protein in the N-terminal section; belongs to the methyltransferase superfamily. tRNA (mnm(5)s(2)U34)-methyltransferase family. This sequence in the C-terminal section; belongs to the DAO family. It depends on FAD as a cofactor.

Its subcellular location is the cytoplasm. It carries out the reaction 5-aminomethyl-2-thiouridine(34) in tRNA + S-adenosyl-L-methionine = 5-methylaminomethyl-2-thiouridine(34) in tRNA + S-adenosyl-L-homocysteine + H(+). Functionally, catalyzes the last two steps in the biosynthesis of 5-methylaminomethyl-2-thiouridine (mnm(5)s(2)U) at the wobble position (U34) in tRNA. Catalyzes the FAD-dependent demodification of cmnm(5)s(2)U34 to nm(5)s(2)U34, followed by the transfer of a methyl group from S-adenosyl-L-methionine to nm(5)s(2)U34, to form mnm(5)s(2)U34. The sequence is that of tRNA 5-methylaminomethyl-2-thiouridine biosynthesis bifunctional protein MnmC from Campylobacter fetus subsp. fetus (strain 82-40).